Here is a 482-residue protein sequence, read N- to C-terminus: QWRF motif-containing protein 3 (482 aa).

Positions 1–20 (MKSCEHELLKTRRGKSREVS) are enriched in basic and acidic residues. 2 disordered regions span residues 1 to 60 (MKSC…GLKK) and 171 to 220 (TAKP…QWAL). Residues 21 to 42 (SRFLSSPSASSSPNRRNSTSNS) are compositionally biased toward low complexity. Residues 191–219 (RTNSSKGIENRLQRNNSVSRYGSSMSQWA) show a composition bias toward polar residues. The QWRF motif motif lies at 292-295 (QWRF).

The protein belongs to the QWRF family.

The protein is QWRF motif-containing protein 3 (QWRF3) of Arabidopsis thaliana (Mouse-ear cress).